We begin with the raw amino-acid sequence, 458 residues long: MKLWGGRFVHESNSFFKKFNSSIQTDYKLVEQDIFSSMSWADALLKSGVLIKSECNEIKNALQKLLCIVKKTPNIVLDSNLEDVHSWVETQLILLVGDLGKKLHTGRSRNDQIATDLKLWCKHKIKDLFNRIIEFKIELIKISDNTQSVIMPGYTHLQRAQPITFSFWCLAYLEMIKRDEDRLKDALKRLNSSPLGCGAISGTTWNIDRENLAKSMGFKSATNNSLDSVSDRDYVVELASVASISMMHLSRFAEDLIFFNSSESKFVELSDTITSGSSLMPQKKNPDSLELIRAKSGRVFGFLVSILVVLKGLPLSYNKDMQEDKKGLFDALNTWSKCLFMSSLVLKNLHINSINCLKASKKSYSNATELADYLVNKGITFRDAHHITGQIVLEALKLNVPLEKLDLSIFKKYSSSIELDVYNFLDVISLLEKRNSKGGVAPKIVSKAIICEKKQLKI.

Belongs to the lyase 1 family. Argininosuccinate lyase subfamily.

The protein localises to the cytoplasm. It catalyses the reaction 2-(N(omega)-L-arginino)succinate = fumarate + L-arginine. It functions in the pathway amino-acid biosynthesis; L-arginine biosynthesis; L-arginine from L-ornithine and carbamoyl phosphate: step 3/3. This is Argininosuccinate lyase from Buchnera aphidicola subsp. Baizongia pistaciae (strain Bp).